Consider the following 477-residue polypeptide: S-triazine hydrolase (477 aa).

2 stretches are compositionally biased toward low complexity: residues 38 to 73 (SPTT…KSSS) and 120 to 132 (PLSS…DPTT). Disordered regions lie at residues 38-77 (SPTT…GVVH) and 120-143 (PLSS…GSPF).

It belongs to the metallo-dependent hydrolases superfamily. ATZ/TRZ family.

The protein operates within xenobiotic degradation; melamine degradation. Functionally, hydrolytic deamination of the S-triazine substrate melamine. This chain is S-triazine hydrolase (trzA), found in Gordonia rubripertincta (Rhodococcus corallinus).